Consider the following 29-residue polypeptide: Histone H2B (29 aa).

A disordered region spans residues 1-29 (MPEPAKSAPKKGSTRTAAKGGKKRRKSRK). Lysine 6 and lysine 11 each carry N6-acetyllysine. Position 13 is a phosphoserine (serine 13). Residues 20–29 (GGKKRRKSRK) show a composition bias toward basic residues.

This sequence belongs to the histone H2B family. The nucleosome is a histone octamer containing two molecules each of H2A, H2B, H3 and H4 assembled in one H3-H4 heterotetramer and two H2A-H2B heterodimers. The octamer wraps approximately 147 bp of DNA. Monoubiquitination at the C-terminal Lys gives a specific tag for epigenetic transcriptional activation and is also prerequisite for histone H3 'Lys-4' and 'Lys-79' methylation. In terms of processing, phosphorylated during apoptosis; which facilitates apoptotic chromatin condensation.

The protein localises to the nucleus. It is found in the chromosome. In terms of biological role, core component of nucleosome. Nucleosomes wrap and compact DNA into chromatin, limiting DNA accessibility to the cellular machineries which require DNA as a template. Histones thereby play a central role in transcription regulation, DNA repair, DNA replication and chromosomal stability. DNA accessibility is regulated via a complex set of post-translational modifications of histones, also called histone code, and nucleosome remodeling. The sequence is that of Histone H2B from Cyprinus carpio (Common carp).